The primary structure comprises 762 residues: 1-phosphatidylinositol 4,5-bisphosphate phosphodiesterase delta-4 (762 aa).

In terms of domain architecture, PH spans leucine 16–aspartate 124. The substrate binding stretch occupies residues lysine 26–alanine 53. 3 consecutive EF-hand domains span residues arginine 134 to glutamate 169, methionine 170 to arginine 205, and alanine 206 to glutamate 237. Aspartate 147, asparagine 149, aspartate 151, lysine 153, glutamate 158, aspartate 183, serine 185, serine 187, threonine 189, and glutamate 194 together coordinate Ca(2+). The short motif at glutamate 213–glutamate 243 is the GBA element. One can recognise a PI-PLC X-box domain in the interval glutamine 290–lysine 435. The active site involves histidine 305. 3 residues coordinate Ca(2+): asparagine 306, glutamate 335, and aspartate 337. The active site involves histidine 350. Position 384 (glutamate 384) interacts with Ca(2+). Positions 433 and 435 each coordinate substrate. Positions leucine 443–proline 471 are enriched in acidic residues. Residues leucine 443–lysine 483 form a disordered region. Serine 457 is subject to Phosphoserine. Positions leucine 493 to arginine 609 constitute a PI-PLC Y-box domain. The substrate site is built by serine 522 and arginine 549. The C2 domain occupies arginine 609–serine 736. Ca(2+)-binding residues include isoleucine 650, aspartate 652, asparagine 676, aspartate 705, tyrosine 706, and aspartate 707. Positions histidine 731–leucine 734 match the PDZ-binding motif.

Interacts with GRIP1. As to quaternary structure, interacts (via GBA motif) with guanine nucleotide-binding protein G(i) alpha subunit GNAI3 (inactive GDP-bound form); high-affinity interaction. In terms of assembly, interacts (via GBA motif) with guanine nucleotide-binding protein G(i) alpha subunit GNAI3 (inactive GDP-bound form); low-affinity interaction. Requires Ca(2+) as cofactor. Highly expressed in skeletal muscle and kidney tissues, and at moderate level in intestinal tissue. Expressed in corneal epithelial cells.

The protein localises to the membrane. Its subcellular location is the nucleus. It is found in the cytoplasm. The protein resides in the endoplasmic reticulum. The catalysed reaction is a 1,2-diacyl-sn-glycero-3-phospho-(1D-myo-inositol-4,5-bisphosphate) + H2O = 1D-myo-inositol 1,4,5-trisphosphate + a 1,2-diacyl-sn-glycerol + H(+). It carries out the reaction a 1,2-diacyl-sn-glycero-3-phospho-(1D-myo-inositol) + H2O = 1D-myo-inositol 1-phosphate + a 1,2-diacyl-sn-glycerol + H(+). In terms of biological role, hydrolyzes the phosphatidylinositol 4,5-bisphosphate (PIP2) to generate 2 second messenger molecules diacylglycerol (DAG) and inositol 1,4,5-trisphosphate (IP3). DAG mediates the activation of protein kinase C (PKC), while IP3 releases Ca(2+) from intracellular stores. Required for acrosome reaction in sperm during fertilization, probably by acting as an important enzyme for intracellular Ca(2+) mobilization in the zona pellucida-induced acrosome reaction. May play a role in cell growth. Modulates the liver regeneration in cooperation with nuclear PKC. Overexpression up-regulates the Erk signaling pathway and proliferation. Its function is as follows. Acts as a non-receptor guanine nucleotide exchange factor which binds to and activates guanine nucleotide-binding protein (G-protein) alpha subunit GNAI3. The chain is 1-phosphatidylinositol 4,5-bisphosphate phosphodiesterase delta-4 from Homo sapiens (Human).